We begin with the raw amino-acid sequence, 339 residues long: 1-aminocyclopropane-1-carboxylate deaminase (339 aa).

K52 is subject to N6-(pyridoxal phosphate)lysine. S79 serves as the catalytic Nucleophile.

This sequence belongs to the ACC deaminase/D-cysteine desulfhydrase family. In terms of assembly, homotrimer. It depends on pyridoxal 5'-phosphate as a cofactor.

It carries out the reaction 1-aminocyclopropane-1-carboxylate + H2O = 2-oxobutanoate + NH4(+). Catalyzes a cyclopropane ring-opening reaction, the irreversible conversion of 1-aminocyclopropane-1-carboxylate (ACC) to ammonia and alpha-ketobutyrate. Allows growth on ACC as a nitrogen source. This is 1-aminocyclopropane-1-carboxylate deaminase from Bradyrhizobium sp. (strain ORS 278).